The chain runs to 542 residues: Chaperonin GroEL (542 aa).

Residues 29-32, 86-90, Gly413, 476-478, and Asp492 each bind ATP; these read TLGP, DGTTT, and NAA.

Belongs to the chaperonin (HSP60) family. As to quaternary structure, forms a cylinder of 14 subunits composed of two heptameric rings stacked back-to-back. Interacts with the co-chaperonin GroES.

The protein resides in the cytoplasm. It carries out the reaction ATP + H2O + a folded polypeptide = ADP + phosphate + an unfolded polypeptide.. Functionally, together with its co-chaperonin GroES, plays an essential role in assisting protein folding. The GroEL-GroES system forms a nano-cage that allows encapsulation of the non-native substrate proteins and provides a physical environment optimized to promote and accelerate protein folding. The chain is Chaperonin GroEL from Streptococcus mutans serotype c (strain ATCC 700610 / UA159).